Reading from the N-terminus, the 146-residue chain is Large ribosomal subunit protein uL15 (146 aa).

The tract at residues 1 to 51 is disordered; sequence MQLNTIKPAEGSKKNRRHVGRGIGSGLGKTAGRGHKGQKSRSGGFHKVGFE. A compositionally biased stretch (gly residues) spans 21 to 31; that stretch reads RGIGSGLGKTA.

It belongs to the universal ribosomal protein uL15 family. In terms of assembly, part of the 50S ribosomal subunit.

In terms of biological role, binds to the 23S rRNA. The protein is Large ribosomal subunit protein uL15 of Polynucleobacter necessarius subsp. necessarius (strain STIR1).